A 240-amino-acid polypeptide reads, in one-letter code: Superoxide dismutase [Cu-Zn] (240 aa).

The N-terminal stretch at 1–32 (MPKPADHRNHAAVSTSVLSALFLGAGAALLSA) is a signal peptide. Cysteine 33 is lipidated: N-palmitoyl cysteine. A lipid anchor (S-diacylglycerol cysteine) is attached at cysteine 33. 2 stretches are compositionally biased toward polar residues: residues 36–51 (PQHA…SIWT) and 68–77 (GAQSLTSTLT). Residues 36-77 (PQHASTVPGTTPSIWTGSPAPSGLSGHDEESPGAQSLTSTLT) form a disordered region. Cu cation is bound by residues histidine 116 and histidine 118. A disulfide bond links cysteine 123 and cysteine 234. Zn(2+)-binding residues include histidine 146 and aspartate 158. Residue histidine 195 coordinates Cu cation.

Belongs to the Cu-Zn superoxide dismutase family. Requires Cu cation as cofactor. Zn(2+) is required as a cofactor.

It is found in the cell membrane. It carries out the reaction 2 superoxide + 2 H(+) = H2O2 + O2. Inhibited by the copper chelator diethyl dithiocarbamate. Its function is as follows. Destroys radicals which are normally produced within the cells and which are toxic to biological systems. May play a role in favoring mycobacterial survival in phagocytes. This is Superoxide dismutase [Cu-Zn] (sodC) from Mycobacterium bovis (strain ATCC BAA-935 / AF2122/97).